We begin with the raw amino-acid sequence, 69 residues long: Large ribosomal subunit protein bL28 (69 aa).

It belongs to the bacterial ribosomal protein bL28 family.

The protein is Large ribosomal subunit protein bL28 of Aquifex aeolicus (strain VF5).